Here is a 771-residue protein sequence, read N- to C-terminus: Probable cation-transporting ATPase G (771 aa).

The 68-residue stretch at 19 to 86 (GRMRVQATGF…AIIDAETVPA (68 aa)) folds into the HMA domain. Residues 72–92 (AAILSAIIDAETVPAAAVPAY) traverse the membrane as a helical segment. A disordered region spans residues 122–143 (DVAAQPSGETSDACCDGEDNED). 5 helical membrane-spanning segments follow: residues 163–183 (VLLT…VVLG), 209–229 (VGVG…GELG), 330–350 (VFAG…ATAA), 387–407 (MIAA…LVWI), and 411–431 (LVVL…VTVV). D462 (4-aspartylphosphate intermediate) is an active-site residue. Residues D651 and D655 each contribute to the Mg(2+) site. Transmembrane regions (helical) follow at residues 657 to 677 (PALA…DVAI) and 716 to 736 (IITV…AVVL).

Belongs to the cation transport ATPase (P-type) (TC 3.A.3) family. Type IB subfamily.

The protein localises to the cell membrane. The enzyme catalyses ATP + H2O = ADP + phosphate + H(+). This Mycobacterium bovis (strain ATCC BAA-935 / AF2122/97) protein is Probable cation-transporting ATPase G (ctpG).